The primary structure comprises 157 residues: 2-C-methyl-D-erythritol 2,4-cyclodiphosphate synthase (157 aa).

A divalent metal cation is bound by residues Asp8 and His10. 4-CDP-2-C-methyl-D-erythritol 2-phosphate-binding positions include 8 to 10 and 34 to 35; these read DVH and HS. His42 is an a divalent metal cation binding site. 4-CDP-2-C-methyl-D-erythritol 2-phosphate is bound by residues 56 to 58, 61 to 65, 132 to 135, and Phe139; these read DIG, FPDTD, and TTEE.

The protein belongs to the IspF family. As to quaternary structure, homotrimer. The cofactor is a divalent metal cation.

The enzyme catalyses 4-CDP-2-C-methyl-D-erythritol 2-phosphate = 2-C-methyl-D-erythritol 2,4-cyclic diphosphate + CMP. It functions in the pathway isoprenoid biosynthesis; isopentenyl diphosphate biosynthesis via DXP pathway; isopentenyl diphosphate from 1-deoxy-D-xylulose 5-phosphate: step 4/6. Its function is as follows. Involved in the biosynthesis of isopentenyl diphosphate (IPP) and dimethylallyl diphosphate (DMAPP), two major building blocks of isoprenoid compounds. Catalyzes the conversion of 4-diphosphocytidyl-2-C-methyl-D-erythritol 2-phosphate (CDP-ME2P) to 2-C-methyl-D-erythritol 2,4-cyclodiphosphate (ME-CPP) with a corresponding release of cytidine 5-monophosphate (CMP). The polypeptide is 2-C-methyl-D-erythritol 2,4-cyclodiphosphate synthase (Clostridium botulinum (strain Alaska E43 / Type E3)).